We begin with the raw amino-acid sequence, 117 residues long: Large ribosomal subunit protein bL20 (117 aa).

It belongs to the bacterial ribosomal protein bL20 family.

Binds directly to 23S ribosomal RNA and is necessary for the in vitro assembly process of the 50S ribosomal subunit. It is not involved in the protein synthesizing functions of that subunit. The chain is Large ribosomal subunit protein bL20 from Helicobacter hepaticus (strain ATCC 51449 / 3B1).